Here is an 81-residue protein sequence, read N- to C-terminus: ATP synthase subunit c (81 aa).

2 helical membrane passes run Pro3–Gly23 and Leu57–Ala77.

It belongs to the ATPase C chain family. F-type ATPases have 2 components, F(1) - the catalytic core - and F(0) - the membrane proton channel. F(1) has five subunits: alpha(3), beta(3), gamma(1), delta(1), epsilon(1). F(0) has four main subunits: a(1), b(1), b'(1) and c(10-14). The alpha and beta chains form an alternating ring which encloses part of the gamma chain. F(1) is attached to F(0) by a central stalk formed by the gamma and epsilon chains, while a peripheral stalk is formed by the delta, b and b' chains.

The protein resides in the cellular thylakoid membrane. In terms of biological role, f(1)F(0) ATP synthase produces ATP from ADP in the presence of a proton or sodium gradient. F-type ATPases consist of two structural domains, F(1) containing the extramembraneous catalytic core and F(0) containing the membrane proton channel, linked together by a central stalk and a peripheral stalk. During catalysis, ATP synthesis in the catalytic domain of F(1) is coupled via a rotary mechanism of the central stalk subunits to proton translocation. Functionally, key component of the F(0) channel; it plays a direct role in translocation across the membrane. A homomeric c-ring of between 10-14 subunits forms the central stalk rotor element with the F(1) delta and epsilon subunits. This is ATP synthase subunit c from Trichodesmium erythraeum (strain IMS101).